A 197-amino-acid chain; its full sequence is Small ribosomal subunit protein uS4c (197 aa).

Residues 85–157 enclose the S4 RNA-binding domain; the sequence is MRLDNILFRL…LQLFTGKELA (73 aa).

Belongs to the universal ribosomal protein uS4 family. In terms of assembly, part of the 30S ribosomal subunit. Contacts protein S5. The interaction surface between S4 and S5 is involved in control of translational fidelity.

It is found in the plastid. In terms of biological role, one of the primary rRNA binding proteins, it binds directly to 16S rRNA where it nucleates assembly of the body of the 30S subunit. Functionally, with S5 and S12 plays an important role in translational accuracy. The protein is Small ribosomal subunit protein uS4c (rps4) of Cuscuta gronovii (Common dodder).